Consider the following 254-residue polypeptide: Isoprenyl transferase (254 aa).

The active site involves D24. A Mg(2+)-binding site is contributed by D24. Residues G25–R28, W29, R37, H41, and S69–E71 each bind substrate. N72 (proton acceptor) is an active-site residue. Substrate contacts are provided by residues W73, R75, R192, and R198–S200. Residue E211 participates in Mg(2+) binding.

The protein belongs to the UPP synthase family. In terms of assembly, homodimer. The cofactor is Mg(2+).

In terms of biological role, catalyzes the condensation of isopentenyl diphosphate (IPP) with allylic pyrophosphates generating different type of terpenoids. The protein is Isoprenyl transferase of Bordetella parapertussis (strain 12822 / ATCC BAA-587 / NCTC 13253).